The chain runs to 153 residues: 6,7-dimethyl-8-ribityllumazine synthase (153 aa).

5-amino-6-(D-ribitylamino)uracil is bound by residues Phe22, Ala56–Glu58, and Thr80–Ile82. Ser85 to Thr86 contacts (2S)-2-hydroxy-3-oxobutyl phosphate. His88 functions as the Proton donor in the catalytic mechanism. Phe113 provides a ligand contact to 5-amino-6-(D-ribitylamino)uracil. Arg127 is a (2S)-2-hydroxy-3-oxobutyl phosphate binding site.

It belongs to the DMRL synthase family. Forms an icosahedral capsid composed of 60 subunits, arranged as a dodecamer of pentamers.

It carries out the reaction (2S)-2-hydroxy-3-oxobutyl phosphate + 5-amino-6-(D-ribitylamino)uracil = 6,7-dimethyl-8-(1-D-ribityl)lumazine + phosphate + 2 H2O + H(+). The protein operates within cofactor biosynthesis; riboflavin biosynthesis; riboflavin from 2-hydroxy-3-oxobutyl phosphate and 5-amino-6-(D-ribitylamino)uracil: step 1/2. Functionally, catalyzes the formation of 6,7-dimethyl-8-ribityllumazine by condensation of 5-amino-6-(D-ribitylamino)uracil with 3,4-dihydroxy-2-butanone 4-phosphate. This is the penultimate step in the biosynthesis of riboflavin. This chain is 6,7-dimethyl-8-ribityllumazine synthase, found in Glaesserella parasuis serovar 5 (strain SH0165) (Haemophilus parasuis).